The following is a 531-amino-acid chain: Transactivator/viroplasmin protein (531 aa).

2 disordered regions span residues 80-101 and 505-531; these read ASGKKPIAEGVSATSPEQTATG and CKSESSGPQTSEEGLQESEDEDFSVLV. Composition is skewed to polar residues over residues 91–100 and 505–517; these read SATSPEQTAT and CKSESSGPQTSEE. Positions 518-531 are enriched in acidic residues; the sequence is GLQESEDEDFSVLV.

The protein belongs to the caulimoviridae viroplasmin family.

It is found in the host cytoplasm. Functionally, enhances the translation of downstream ORFs on polycistronic mRNAs. The polypeptide is Transactivator/viroplasmin protein (Cestrum yellow leaf curling virus (CmYLCV)).